Here is a 603-residue protein sequence, read N- to C-terminus: DNA ligase (603 aa).

Residue E262 coordinates ATP. K264 functions as the N6-AMP-lysine intermediate in the catalytic mechanism. The ATP site is built by R269, R285, E315, F355, R432, and K438.

This sequence belongs to the ATP-dependent DNA ligase family. Requires Mg(2+) as cofactor.

It carries out the reaction ATP + (deoxyribonucleotide)n-3'-hydroxyl + 5'-phospho-(deoxyribonucleotide)m = (deoxyribonucleotide)n+m + AMP + diphosphate.. DNA ligase that seals nicks in double-stranded DNA during DNA replication, DNA recombination and DNA repair. The protein is DNA ligase of Caldivirga maquilingensis (strain ATCC 700844 / DSM 13496 / JCM 10307 / IC-167).